The primary structure comprises 120 residues: Large ribosomal subunit protein uL18 (120 aa).

The protein belongs to the universal ribosomal protein uL18 family. Part of the 50S ribosomal subunit; part of the 5S rRNA/L5/L18/L25 subcomplex. Contacts the 5S and 23S rRNAs.

This is one of the proteins that bind and probably mediate the attachment of the 5S RNA into the large ribosomal subunit, where it forms part of the central protuberance. This chain is Large ribosomal subunit protein uL18, found in Herminiimonas arsenicoxydans.